Here is a 230-residue protein sequence, read N- to C-terminus: Octanoyltransferase (230 aa).

Residues 40–218 (PSLDDVLILL…CFAEVFGVEL (179 aa)) form the BPL/LPL catalytic domain. Residues 82 to 89 (RGGEVTYH), 149 to 151 (AIG), and 162 to 164 (GFA) each bind substrate. The Acyl-thioester intermediate role is filled by Cys-180.

The protein belongs to the LipB family.

The protein localises to the cytoplasm. It catalyses the reaction octanoyl-[ACP] + L-lysyl-[protein] = N(6)-octanoyl-L-lysyl-[protein] + holo-[ACP] + H(+). The protein operates within protein modification; protein lipoylation via endogenous pathway; protein N(6)-(lipoyl)lysine from octanoyl-[acyl-carrier-protein]: step 1/2. Catalyzes the transfer of endogenously produced octanoic acid from octanoyl-acyl-carrier-protein onto the lipoyl domains of lipoate-dependent enzymes. Lipoyl-ACP can also act as a substrate although octanoyl-ACP is likely to be the physiological substrate. This chain is Octanoyltransferase, found in Nostoc punctiforme (strain ATCC 29133 / PCC 73102).